The primary structure comprises 169 residues: MASTQNIVEEVQKMLDTYDTNKDGEITKAEAVEYFKGKKAFNPERSAIYLFQVYDKDNDGKITIKELAGDIDFDKALKEYKEKQAKSKQQEAEVEEDIEAFILRHNKDDNTDITKDELIQGFKETGAKDPEKSANFILTEMDTNKDGTITVKELRVYYQKVQKLLNPDQ.

EF-hand domains are found at residues 6–41 (NIVEEVQKMLDTYDTNKDGEITKAEAVEYFKGKKAF), 42–77 (NPERSAIYLFQVYDKDNDGKITIKELAGDIDFDKAL), 93–128 (EVEEDIEAFILRHNKDDNTDITKDELIQGFKETGAK), and 129–164 (DPEKSANFILTEMDTNKDGTITVKELRVYYQKVQKL). Asp19, Asn21, Asp23, Glu25, Glu30, Asp55, Asp57, Asp59, Lys61, Glu66, Asp108, Asn110, Asp112, Glu117, Asp142, Asn144, Asp146, Thr148, and Glu153 together coordinate Ca(2+).

Its function is as follows. May be involved in the phase-shift of cells from growth to differentiation. The polypeptide is Calfumirin-1 (cafA) (Dictyostelium discoideum (Social amoeba)).